We begin with the raw amino-acid sequence, 139 residues long: Large-conductance mechanosensitive channel 1 (139 aa).

3 helical membrane passes run 8 to 28, 30 to 50, and 81 to 101; these read FISK…AAFG, IVDS…FGGL, and GSFI…FLMV.

This sequence belongs to the MscL family. Homopentamer.

Its subcellular location is the cell inner membrane. In terms of biological role, channel that opens in response to stretch forces in the membrane lipid bilayer. May participate in the regulation of osmotic pressure changes within the cell. The protein is Large-conductance mechanosensitive channel 1 of Mesorhizobium japonicum (strain LMG 29417 / CECT 9101 / MAFF 303099) (Mesorhizobium loti (strain MAFF 303099)).